A 284-amino-acid polypeptide reads, in one-letter code: Nucleotide-binding protein PP_0949 (284 aa).

Residue glycine 8–serine 15 coordinates ATP. Aspartate 60–asparagine 63 contacts GTP.

The protein belongs to the RapZ-like family.

In terms of biological role, displays ATPase and GTPase activities. The protein is Nucleotide-binding protein PP_0949 of Pseudomonas putida (strain ATCC 47054 / DSM 6125 / CFBP 8728 / NCIMB 11950 / KT2440).